The following is a 98-amino-acid chain: Large ribosomal subunit protein eL21 (98 aa).

Over residues 1-17 the composition is skewed to basic residues; it reads MQRSRGFRSKSRRKMTK. The segment at 1-28 is disordered; the sequence is MQRSRGFRSKSRRKMTKVVREGRSNPIT.

It belongs to the eukaryotic ribosomal protein eL21 family.

This is Large ribosomal subunit protein eL21 from Methanobrevibacter smithii (strain ATCC 35061 / DSM 861 / OCM 144 / PS).